Reading from the N-terminus, the 813-residue chain is Leucine--tRNA ligase (813 aa).

A 'HIGH' region motif is present at residues 41 to 51; that stretch reads PYPSGTLHMGH. Residues 575-579 carry the 'KMSKS' region motif; sequence KMSKS. Lys578 is a binding site for ATP.

It belongs to the class-I aminoacyl-tRNA synthetase family.

It localises to the cytoplasm. The enzyme catalyses tRNA(Leu) + L-leucine + ATP = L-leucyl-tRNA(Leu) + AMP + diphosphate. The polypeptide is Leucine--tRNA ligase (Francisella philomiragia subsp. philomiragia (strain ATCC 25017 / CCUG 19701 / FSC 153 / O#319-036)).